A 793-amino-acid polypeptide reads, in one-letter code: Toll-like receptor 2 type-1 (793 aa).

The signal sequence occupies residues 1–25 (MFNQSKQKPTMKLMWQAWLIYTALA). Residues 26–597 (AHLPEEQALR…QLSLMECHRS (572 aa)) are Extracellular-facing. Cysteines 41 and 47 form a disulfide. An N-linked (GlcNAc...) asparagine glycan is attached at N48. LRR repeat units follow at residues 64-85 (KITV…DLQK), 88-109 (NLRT…SFGS), 112-133 (KLEL…WFGP), 136-157 (SLQH…SPFS), 161-182 (NLSS…NFEG), and 185-206 (FLNT…SLKS). N-linked (GlcNAc...) asparagine glycosylation occurs at N120. N161, N195, N254, and N325 each carry an N-linked (GlcNAc...) asparagine glycan. A disulfide bridge links C362 with C391. 7 LRR repeats span residues 370-391 (SLLY…ETIC), 397-418 (SLQT…ARYI), 423-444 (KLIN…CEWP), 446-467 (NLKY…IPST), 468-486 (LEVL…LQLP), 487-508 (FLKE…TDIP), and 509-530 (NLVA…EFES). Residue N402 is glycosylated (N-linked (GlcNAc...) asparagine). Cysteines 441 and 463 form a disulfide. Residue N451 is glycosylated (N-linked (GlcNAc...) asparagine). An LRRCT domain is found at 542 to 596 (NNFICSCEFLSFIHHEAGIAQVLVGWPESYICDSPLTVRGAQVGSVQLSLMECHR). The chain crosses the membrane as a helical span at residues 598–618 (LLVSLICTLVFLFILILVVVG). Over 619-793 (YKYHAVWYMR…WENLKAALKS (175 aa)) the chain is Cytoplasmic. Positions 648–791 (ICYDAFVSYS…MFWENLKAAL (144 aa)) constitute a TIR domain.

This sequence belongs to the Toll-like receptor family. As to quaternary structure, binds MYD88 (via TIR domain). In terms of processing, N-glycosylated. TLR2-1 is more heavily glycosylated than TLR2-2. As to expression, highly expressed in ovary. Detected at lower levels in heart, lung, gizzard and testis.

The protein localises to the membrane. In terms of biological role, participates in the innate immune response to microbial agents. Acts via MYD88 and TRAF6, leading to NF-kappa-B activation, cytokine secretion and the inflammatory response. Does not respond to LPS and responds with less ability than TLR2-2 to mycoplasmal macrophage-activating lipopeptide-2kD (MALP-2). The protein is Toll-like receptor 2 type-1 (TLR2-1) of Gallus gallus (Chicken).